A 400-amino-acid polypeptide reads, in one-letter code: CCA-adding enzyme (400 aa).

Residues Gly28 and Arg31 each coordinate ATP. 2 residues coordinate CTP: Gly28 and Arg31. The Mg(2+) site is built by Asp41 and Asp43. Arg112, Asp155, Arg158, Arg161, and Arg164 together coordinate ATP. Residues Arg112, Asp155, Arg158, Arg161, and Arg164 each contribute to the CTP site.

It belongs to the tRNA nucleotidyltransferase/poly(A) polymerase family. Bacterial CCA-adding enzyme type 3 subfamily. As to quaternary structure, homodimer. Mg(2+) serves as cofactor.

It catalyses the reaction a tRNA precursor + 2 CTP + ATP = a tRNA with a 3' CCA end + 3 diphosphate. The enzyme catalyses a tRNA with a 3' CCA end + 2 CTP + ATP = a tRNA with a 3' CCACCA end + 3 diphosphate. Functionally, catalyzes the addition and repair of the essential 3'-terminal CCA sequence in tRNAs without using a nucleic acid template. Adds these three nucleotides in the order of C, C, and A to the tRNA nucleotide-73, using CTP and ATP as substrates and producing inorganic pyrophosphate. tRNA 3'-terminal CCA addition is required both for tRNA processing and repair. Also involved in tRNA surveillance by mediating tandem CCA addition to generate a CCACCA at the 3' terminus of unstable tRNAs. While stable tRNAs receive only 3'-terminal CCA, unstable tRNAs are marked with CCACCA and rapidly degraded. The polypeptide is CCA-adding enzyme (Staphylococcus haemolyticus (strain JCSC1435)).